The sequence spans 422 residues: Imidazolonepropionase (422 aa).

2 residues coordinate Fe(3+): His-82 and His-84. Residues His-82 and His-84 each contribute to the Zn(2+) site. 4-imidazolone-5-propanoate contacts are provided by Arg-91, Tyr-154, and His-187. Position 154 (Tyr-154) interacts with N-formimidoyl-L-glutamate. Position 252 (His-252) interacts with Fe(3+). Residue His-252 participates in Zn(2+) binding. Glu-255 is a binding site for 4-imidazolone-5-propanoate. Asp-327 contributes to the Fe(3+) binding site. Residue Asp-327 coordinates Zn(2+). N-formimidoyl-L-glutamate contacts are provided by Asn-329 and Gly-331. Ser-332 lines the 4-imidazolone-5-propanoate pocket.

Belongs to the metallo-dependent hydrolases superfamily. HutI family. The cofactor is Zn(2+). Requires Fe(3+) as cofactor.

Its subcellular location is the cytoplasm. The enzyme catalyses 4-imidazolone-5-propanoate + H2O = N-formimidoyl-L-glutamate. The protein operates within amino-acid degradation; L-histidine degradation into L-glutamate; N-formimidoyl-L-glutamate from L-histidine: step 3/3. Functionally, catalyzes the hydrolytic cleavage of the carbon-nitrogen bond in imidazolone-5-propanoate to yield N-formimidoyl-L-glutamate. It is the third step in the universal histidine degradation pathway. This chain is Imidazolonepropionase, found in Alkaliphilus metalliredigens (strain QYMF).